Consider the following 439-residue polypeptide: Chitinase-like protein Idgf1 (439 aa).

The first 20 residues, 1–20 (MRFQLFYILGLLSVTSLTQA), serve as a signal peptide directing secretion. Positions 22 to 439 (NNLVCYYDST…IVRSIKYFMG (418 aa)) constitute a GH18 domain. Residues Cys26 and Cys53 are joined by a disulfide bond. Residues Asn122, Asn218, and Asn346 are each glycosylated (N-linked (GlcNAc...) asparagine). A disulfide bridge connects residues Cys340 and Cys423.

This sequence belongs to the glycosyl hydrolase 18 family. IDGF subfamily. Glycosylated.

Its subcellular location is the secreted. Its function is as follows. Cooperates with insulin-like peptides to stimulate the proliferation, polarization and motility of imaginal disk cells. May act by stabilizing the binding of insulin-like peptides to its receptor through a simultaneous interaction with both molecules to form a multiprotein signaling complex. In Drosophila simulans (Fruit fly), this protein is Chitinase-like protein Idgf1 (Idgf1).